A 454-amino-acid polypeptide reads, in one-letter code: Argininosuccinate lyase (454 aa).

The protein belongs to the lyase 1 family. Argininosuccinate lyase subfamily.

It is found in the cytoplasm. The catalysed reaction is 2-(N(omega)-L-arginino)succinate = fumarate + L-arginine. Its pathway is amino-acid biosynthesis; L-arginine biosynthesis; L-arginine from L-ornithine and carbamoyl phosphate: step 3/3. The protein is Argininosuccinate lyase of Herpetosiphon aurantiacus (strain ATCC 23779 / DSM 785 / 114-95).